The primary structure comprises 473 residues: Glycogen synthase (473 aa).

Lys-15 is an ADP-alpha-D-glucose binding site.

It belongs to the glycosyltransferase 1 family. Bacterial/plant glycogen synthase subfamily.

The enzyme catalyses [(1-&gt;4)-alpha-D-glucosyl](n) + ADP-alpha-D-glucose = [(1-&gt;4)-alpha-D-glucosyl](n+1) + ADP + H(+). The protein operates within glycan biosynthesis; glycogen biosynthesis. Functionally, synthesizes alpha-1,4-glucan chains using ADP-glucose. This chain is Glycogen synthase, found in Flavobacterium johnsoniae (strain ATCC 17061 / DSM 2064 / JCM 8514 / BCRC 14874 / CCUG 350202 / NBRC 14942 / NCIMB 11054 / UW101) (Cytophaga johnsonae).